A 126-amino-acid polypeptide reads, in one-letter code: BPTI/Kunitz domain-containing protein (126 aa).

2 consecutive BPTI/Kunitz inhibitor domains span residues 14 to 64 (CQLP…RRRC) and 70 to 120 (CSLP…RFQC). Cystine bridges form between Cys-14/Cys-64, Cys-23/Cys-47, Cys-39/Cys-60, Cys-70/Cys-120, Cys-79/Cys-103, and Cys-95/Cys-116.

In terms of tissue distribution, component of the acid-soluble and acid-insoluble organic matrix of calcified shell layers (at protein level).

It localises to the secreted. Its function is as follows. Serine protease inhibitor. This chain is BPTI/Kunitz domain-containing protein, found in Haliotis asinina (Donkey's ear abalone).